The sequence spans 414 residues: Succinylornithine transaminase (414 aa).

Lysine 260 bears the N6-(pyridoxal phosphate)lysine mark.

This sequence belongs to the class-III pyridoxal-phosphate-dependent aminotransferase family. AstC subfamily. Pyridoxal 5'-phosphate is required as a cofactor.

The catalysed reaction is N(2)-succinyl-L-ornithine + 2-oxoglutarate = N-succinyl-L-glutamate 5-semialdehyde + L-glutamate. The protein operates within amino-acid degradation; L-arginine degradation via AST pathway; L-glutamate and succinate from L-arginine: step 3/5. Its function is as follows. Catalyzes the transamination of N(2)-succinylornithine and alpha-ketoglutarate into N(2)-succinylglutamate semialdehyde and glutamate. Can also act as an acetylornithine aminotransferase. This is Succinylornithine transaminase from Yersinia enterocolitica serotype O:8 / biotype 1B (strain NCTC 13174 / 8081).